The following is a 132-amino-acid chain: Large ribosomal subunit protein bL12 (132 aa).

The disordered stretch occupies residues 112-132 (KEAADKAKTQLEGAGGTINLK).

Belongs to the bacterial ribosomal protein bL12 family. As to quaternary structure, homodimer. Part of the ribosomal stalk of the 50S ribosomal subunit. Forms a multimeric L10(L12)X complex, where L10 forms an elongated spine to which 2 to 4 L12 dimers bind in a sequential fashion. Binds GTP-bound translation factors.

Forms part of the ribosomal stalk which helps the ribosome interact with GTP-bound translation factors. Is thus essential for accurate translation. The sequence is that of Large ribosomal subunit protein bL12 from Leifsonia xyli subsp. xyli (strain CTCB07).